A 225-amino-acid polypeptide reads, in one-letter code: NAD(P)H-quinone oxidoreductase subunit K, chloroplastic (225 aa).

Residues cysteine 43, cysteine 44, cysteine 108, and cysteine 139 each contribute to the [4Fe-4S] cluster site.

The protein belongs to the complex I 20 kDa subunit family. NDH is composed of at least 16 different subunits, 5 of which are encoded in the nucleus. It depends on [4Fe-4S] cluster as a cofactor.

Its subcellular location is the plastid. It is found in the chloroplast thylakoid membrane. The catalysed reaction is a plastoquinone + NADH + (n+1) H(+)(in) = a plastoquinol + NAD(+) + n H(+)(out). The enzyme catalyses a plastoquinone + NADPH + (n+1) H(+)(in) = a plastoquinol + NADP(+) + n H(+)(out). Functionally, NDH shuttles electrons from NAD(P)H:plastoquinone, via FMN and iron-sulfur (Fe-S) centers, to quinones in the photosynthetic chain and possibly in a chloroplast respiratory chain. The immediate electron acceptor for the enzyme in this species is believed to be plastoquinone. Couples the redox reaction to proton translocation, and thus conserves the redox energy in a proton gradient. This is NAD(P)H-quinone oxidoreductase subunit K, chloroplastic from Lactuca sativa (Garden lettuce).